A 159-amino-acid chain; its full sequence is uncharacterized protein (159 aa).

The disordered stretch occupies residues 9–36; sequence VTSGNKEKKKKRSSAGLTGHAPPAADSS.

This is an uncharacterized protein from Caenorhabditis elegans.